The following is a 924-amino-acid chain: MDTLEEPECPPHKNRIFVSSSKDFEGYPSKAIVPVQFVALLTSIHLTETKCLLGFSNFERRGDQSQEDQYLIKLKFKDRGSERLARITISLLCQYFDIELPDLDSDSGASPTVILRDIHLERLCFSSCKALYVSKHGNYTLFLEDIKPLDLVSVISTISTKSTNSSKHSSSELISECDLNNSLVDIFNNLIEMNRDEKNRFKFVKLIHYDIELKKFVQDQQKVLSQKSKAAAINPFFVPNRLGIPYIESQNEFNSQLMTLNVDEPTTDISNMGEEMHDSADPIEDSDSSTTSSTGKYFSSKSYIQSQTPERKTSVPNNWHDDDSGSKRKRKLSFHSPNASSIRKAISYEQLSLASVGSVERLEGKIVGMNPPQFASINEFKYCTLKLYFTQLLPNVPDKVLVPGVNCIEIVIPTRERICELFGVLNCQSDKISDILLLEKPDRISVEVERILWDNDKTASPGMAVWSLKNISTDTQAQAQVQVPAQSSASIDPSRTRMSKMARKDPTIEFCQLGLDTFETKYITMFGMLVSCSFDKPAFISFVFSDFTKNDIVQNYLYDRYLIDYENKLELNEGFKAIMYKNQFETFDSKLRKIFNNGLRDLQNGRDENLSQYGIVCKMNIKVKMYNGKLNAIVRECEPVPHSQISSIASPSQCEHLRLFYQRAFKRIGESAISRYFEEYRRFFPIHRNGSHLAKLRFDEVKHEPKKSPTTPALAEHIPDLNADVSSFDVKFTDISSLLDSSARLPRPQQTHKSNTLYSCEGRIIAIEYHASDLCFHITNELPLLQTRGLAPERVLQLHIITSKNFAYFFNRSSAYLQRQPLEEKYTQLAQFLGHSFKFNITSSLTLFPDTTVALQIWCPIECTFRELQQQLAHPKVAAAPDSGSLDCAINATVNPLRLLAAQNGVTVKKEEDNDDDAGAVPTS.

The disordered stretch occupies residues 265-336 (PTTDISNMGE…KRKRKLSFHS (72 aa)). The segment covering 295–308 (GKYFSSKSYIQSQT) has biased composition (polar residues). Serine 306 is subject to Phosphoserine. Position 308 is a phosphothreonine (threonine 308). The span at 309 to 326 (PERKTSVPNNWHDDDSGS) shows a compositional bias: basic and acidic residues. A Phosphoserine modification is found at serine 333. The OB DNA-binding region spans 500-686 (KMARKDPTIE…FEEYRRFFPI (187 aa)).

Interacts with POL1, EST1, FUN12, STM1, STN1 and TEN1.

Its subcellular location is the chromosome. The protein localises to the telomere. Single-stranded telomeric DNA-binding protein that regulates telomere replication. Has a role in both positive and negative regulation. Promotes [TG(1-3)] strand lengthening via interaction with EST1. Promotes [C(1-3)A] strand re-synthesis by DNA polymerase alpha via interaction with POL1. Negatively regulates telomere elongation of the G strand via binding with STN1 thereby inhibiting telomerase activity. This Saccharomyces cerevisiae (strain ATCC 204508 / S288c) (Baker's yeast) protein is Cell division control protein 13 (CDC13).